A 144-amino-acid polypeptide reads, in one-letter code: Maximins 11/H1 (144 aa).

The N-terminal stretch at 1-18 is a signal peptide; it reads MNFKYIVAVSFLIASAYA. The propeptide occupies 19-43; sequence RSEENDEQSLSQRDVLEEESLREIR. Position 70 is an asparagine amide (N70). Residues 74 to 123 constitute a propeptide that is removed on maturation; the sequence is TAEDHEVMKRLEAVMRDLDSLDYPEEASERETRGFNQEEIANLFTKKEKR. L143 carries the leucine amide modification.

The protein belongs to the bombinin family. As to expression, expressed by the skin glands.

Its subcellular location is the secreted. Maximin-11 shows antimicrobial activity against bacteria and against the fungus C.albicans. It has little hemolytic activity. Functionally, maximin-H1 shows antibacterial activity against both Gram-positive and Gram-negative bacteria. It also shows antimicrobial activity against the fungus C.albicans. Shows strong hemolytic activity. This chain is Maximins 11/H1, found in Bombina maxima (Giant fire-bellied toad).